The primary structure comprises 554 residues: L-ascorbate oxidase homolog (554 aa).

The signal sequence occupies residues 1–21; the sequence is MGSGKVTFVALLLCLSVGVIA. Plastocyanin-like domains are found at residues 22–143 and 196–296; these read EDPY…LNVH and SAKV…AIIR. 3 N-linked (GlcNAc...) asparagine glycosylation sites follow: Asn-31, Asn-59, and Asn-108. A disulfide bridge links Cys-101 with Cys-540. Residues Asn-332, Asn-352, and Asn-423 are each glycosylated (N-linked (GlcNAc...) asparagine). Residues 411 to 521 enclose the Plastocyanin-like 3 domain; it reads DPSKLTIATN…LGEQLYFSVL (111 aa).

The protein belongs to the multicopper oxidase family. As to expression, pollen.

The protein resides in the secreted. Its subcellular location is the extracellular space. Probable oxidoreductase that may be involved in pollen tube growth. The protein is L-ascorbate oxidase homolog of Nicotiana tabacum (Common tobacco).